A 200-amino-acid polypeptide reads, in one-letter code: 3-isopropylmalate dehydratase small subunit (200 aa).

This sequence belongs to the LeuD family. LeuD type 1 subfamily. Heterodimer of LeuC and LeuD.

It catalyses the reaction (2R,3S)-3-isopropylmalate = (2S)-2-isopropylmalate. Its pathway is amino-acid biosynthesis; L-leucine biosynthesis; L-leucine from 3-methyl-2-oxobutanoate: step 2/4. Its function is as follows. Catalyzes the isomerization between 2-isopropylmalate and 3-isopropylmalate, via the formation of 2-isopropylmaleate. The polypeptide is 3-isopropylmalate dehydratase small subunit (Pectobacterium carotovorum subsp. carotovorum (strain PC1)).